The primary structure comprises 477 residues: Ribulose bisphosphate carboxylase large chain (477 aa).

Positions 1-2 (MS) are excised as a propeptide. At Pro-3 the chain carries N-acetylproline. Lys-14 is modified (N6,N6,N6-trimethyllysine). 2 residues coordinate substrate: Asn-123 and Thr-173. The active-site Proton acceptor is the Lys-175. Residue Lys-177 coordinates substrate. Residues Lys-201, Asp-203, and Glu-204 each contribute to the Mg(2+) site. Residue Lys-201 is modified to N6-carboxylysine. His-294 serves as the catalytic Proton acceptor. Substrate is bound by residues Arg-295, His-327, and Ser-379.

The protein belongs to the RuBisCO large chain family. Type I subfamily. Heterohexadecamer of 8 large chains and 8 small chains; disulfide-linked. The disulfide link is formed within the large subunit homodimers. Mg(2+) serves as cofactor. Post-translationally, the disulfide bond which can form in the large chain dimeric partners within the hexadecamer appears to be associated with oxidative stress and protein turnover.

It is found in the plastid. The protein resides in the chloroplast. The catalysed reaction is 2 (2R)-3-phosphoglycerate + 2 H(+) = D-ribulose 1,5-bisphosphate + CO2 + H2O. It catalyses the reaction D-ribulose 1,5-bisphosphate + O2 = 2-phosphoglycolate + (2R)-3-phosphoglycerate + 2 H(+). Functionally, ruBisCO catalyzes two reactions: the carboxylation of D-ribulose 1,5-bisphosphate, the primary event in carbon dioxide fixation, as well as the oxidative fragmentation of the pentose substrate in the photorespiration process. Both reactions occur simultaneously and in competition at the same active site. The chain is Ribulose bisphosphate carboxylase large chain (rbcL) from Solanum tuberosum (Potato).